The following is a 432-amino-acid chain: CinA-like protein (432 aa).

This sequence belongs to the CinA family.

The chain is CinA-like protein from Colwellia psychrerythraea (strain 34H / ATCC BAA-681) (Vibrio psychroerythus).